The sequence spans 121 residues: Putative iron-sulfur cluster insertion protein ErpA (121 aa).

Iron-sulfur cluster contacts are provided by C49, C113, and C115.

This sequence belongs to the HesB/IscA family. Homodimer. Requires iron-sulfur cluster as cofactor.

Required for insertion of 4Fe-4S clusters. The chain is Putative iron-sulfur cluster insertion protein ErpA from Verminephrobacter eiseniae (strain EF01-2).